The sequence spans 214 residues: Calcineurin B homologous protein 3 (214 aa).

Residues 1–20 form a disordered region; that stretch reads MGAAHSASEEVRELEGKTGF. Gly2 carries N-myristoyl glycine lipidation. Positions 7–16 are enriched in basic and acidic residues; it reads ASEEVRELEG. Residues 110-145 form the EF-hand domain; the sequence is SRKEKLRFLFHMYDSDSDGRITLEEYRNVVEELLSG. Residues Asp123, Asp125, Asp127, Arg129, and Glu134 each contribute to the Ca(2+) site.

It belongs to the calcineurin regulatory subunit family. CHP subfamily. Monomer. Homodimer; disulfide-linked. Interacts with SLC9A1/NHE1; the interaction enables an optimal Na(+)/H(+) exchange activity. Expressed in mature megakaryocytes and polymorphonuclear granulocytes (at protein level). Abundantly expressed in heart. Also expressed at a lower level in adult testis and salivary gland, and in the placenta.

It is found in the nucleus. It localises to the cytoplasm. Its subcellular location is the membrane. The protein resides in the cell membrane. The protein localises to the cell projection. It is found in the lamellipodium. It localises to the ruffle membrane. Functions as an integral cofactor in cell pH regulation by controlling plasma membrane-type Na(+)/H(+) exchange activity. Promotes the maturation, transport, cell surface stability and exchange activity of SLC9A1/NHE1 at the plasma membrane. Promotes the induction of hematopoietic stem cell differentiation toward megakaryocytic lineage. Essential for the coupling of ERK cascade activation with the expression of ETS family genes in megakaryocytic differentiation. Also involved in granulocytic differentiation in a ERK-dependent manner. Inhibits the phosphatase activity of calcineurin. The sequence is that of Calcineurin B homologous protein 3 (TESC) from Homo sapiens (Human).